The primary structure comprises 462 residues: Retinoic acid receptor alpha (462 aa).

Positions 1–87 (MASNSSSCPT…PPPLPRIYKP (87 aa)) are modulating. Over residues 52–64 (GYSTPSPATIETQ) the composition is skewed to polar residues. The interval 52–77 (GYSTPSPATIETQSSSSEEIVPSPPS) is disordered. Position 77 is a phosphoserine; by CDK7 (serine 77). 2 consecutive NR C4-type zinc fingers follow at residues 88-108 (CFVC…CEGC) and 124-148 (CHRD…LQKC). The nuclear receptor DNA-binding region spans 88–153 (CFVCQDKSSG…RLQKCFEVGM (66 aa)). At serine 96 the chain carries Phosphoserine; by PKB/AKT1. The segment at 154–182 (SKESVRNDRNKKKKEVPKPECSESYTLTP) is hinge. Residues lysine 166 and lysine 171 each participate in a glycyl lysine isopeptide (Lys-Gly) (interchain with G-Cter in SUMO) cross-link. Residues 183 to 417 (EVGELIEKVR…PLIQEMLENS (235 aa)) form the NR LBD domain. Serine 219 bears the Phosphoserine; by PKA mark. An all-trans-retinoate-binding site is contributed by cysteine 235. Positions 254–258 (IADQI) match the UBR5-degron motif. Position 287 (serine 287) interacts with all-trans-retinoate. Phosphoserine; by PKA is present on serine 369. A Glycyl lysine isopeptide (Lys-Gly) (interchain with G-Cter in SUMO) cross-link involves residue lysine 399. Residues 404-419 (GSMPPLIQEMLENSEG) are required for binding corepressor NCOR1. Residues 408–416 (PLIQEMLEN) carry the 9aaTAD motif. Positions 419-462 (GLDTLSGQPGGGGRDGGGLAPPPGSCSPSLSPSSNRSSPATHSP) are disordered. Residues 426 to 437 (QPGGGGRDGGGL) show a composition bias toward gly residues. The segment covering 444–462 (CSPSLSPSSNRSSPATHSP) has biased composition (low complexity).

It belongs to the nuclear hormone receptor family. NR1 subfamily. Heterodimer; with RXRA (via C-terminus); association with RXRA is enhanced by pulsatile shear stress. Binds DNA preferentially as a heterodimer. RXRA serves as enhancer to induce RARA binding to RARE. Interacts with RXRG. Interacts with coactivators NCOA3 and NCOA6. Interacts with NCOA7; the interaction requires ligand-binding. Interacts (via the ligand-binding domain) with PRAME; the interaction is ligand (retinoic acid)-dependent. Interacts with AKT1; the interaction phosphorylates RARA and represses transactivation. Interacts with PRKAR1A; the interaction negatively regulates RARA transcriptional activity. Interacts with NCOR1 and NCOR2. Interacts with PRMT2. Interacts with LRIF1. Interacts with ASXL1 and NCOA1. Interacts with ACTN4. In a complex with HDAC3, HDAC5 and HDAC7; the HDACs serve as corepressors of RARA, causing its deacetylation and inhibition of RARE DNA element binding; association with HDAC3, HDAC5 and HDAC7 is increased upon oscillatory shear stress. Interacts with CDK7. In the absence of hormonal ligand, interacts with TACC1. Phosphorylated on serine and threonine residues. Phosphorylation does not change during cell cycle. Phosphorylation on Ser-77 is crucial for transcriptional activity. Phosphorylation by AKT1 is required for the repressor activity but has no effect on DNA binding, protein stability nor subcellular localization. Phosphorylated by PKA in vitro. This phosphorylation on Ser-219 and Ser-369 is critical for ligand binding, nuclear localization and transcriptional activity in response to FSH signaling. In terms of processing, sumoylated with SUMO2, mainly on Lys-399 which is also required for SENP6 binding. On all-trans retinoic acid (ATRA) binding, a conformational change may occur that allows sumoylation on two additional site, Lys-166 and Lys-171. Probably desumoylated by SENP6. Sumoylation levels determine nuclear localization and regulate ATRA-mediated transcriptional activity. Post-translationally, trimethylation enhances heterodimerization with RXRA and positively modulates the transcriptional activation. Ubiquitinated by UBR5, leading to its degradation: UBR5 specifically recognizes and binds ligand-bound RARA when it is not associated with coactivators (NCOAs). In presence of NCOAs, the UBR5-degron is not accessible, preventing its ubiquitination and degradation. In terms of processing, acetylated; acetylation is increased upon pulsatile shear stress and decreased upon oscillatory shear stress. Expressed in monocytes.

Its subcellular location is the nucleus. It localises to the cytoplasm. Its function is as follows. Receptor for retinoic acid. Retinoic acid receptors bind as heterodimers to their target response elements in response to their ligands, all-trans or 9-cis retinoic acid, and regulate gene expression in various biological processes. The RXR/RAR heterodimers bind to the retinoic acid response elements (RARE) composed of tandem 5'-AGGTCA-3' sites known as DR1-DR5. In the absence of ligand, the RXR-RAR heterodimers associate with a multiprotein complex containing transcription corepressors that induce histone deacetylation, chromatin condensation and transcriptional suppression. On ligand binding, the corepressors dissociate from the receptors and associate with the coactivators leading to transcriptional activation. Formation of a complex with histone deacetylases might lead to inhibition of RARE DNA element binding and to transcriptional repression. Transcriptional activation and RARE DNA element binding might be supported by the transcription factor KLF2. RARA plays an essential role in the regulation of retinoic acid-induced germ cell development during spermatogenesis. Has a role in the survival of early spermatocytes at the beginning prophase of meiosis. In Sertoli cells, may promote the survival and development of early meiotic prophase spermatocytes. In concert with RARG, required for skeletal growth, matrix homeostasis and growth plate function. Together with RXRA, positively regulates microRNA-10a expression, thereby inhibiting the GATA6/VCAM1 signaling response to pulsatile shear stress in vascular endothelial cells. In association with HDAC3, HDAC5 and HDAC7 corepressors, plays a role in the repression of microRNA-10a and thereby promotes the inflammatory response. The sequence is that of Retinoic acid receptor alpha (RARA) from Homo sapiens (Human).